A 30-amino-acid chain; its full sequence is Cyclotide hyen-E (30 aa).

Positions 1 to 30 (GVPCGESCVYIPCFTGIINCSCRDKVCYNN) form a cross-link, cyclopeptide (Gly-Asn). Disulfide bonds link Cys4-Cys20, Cys8-Cys22, and Cys13-Cys27.

Post-translationally, this is a cyclic peptide. Detected in stems (at protein level).

Its function is as follows. Probably participates in a plant defense mechanism. Has cytotoxic activity against HUVEC cells (LC(50)= 2.17 uM) and various cancer cells including HeLa (LC(50)= 3.05 uM), MCF-7 and K562. Displays very weak hemolytic activity. Binds to and induces leakage in phospholipd membranes, particularly ones containing 1-palmitoyl-2-oleophosphatidylethanolamine (POPE). This is Cyclotide hyen-E from Pigea enneasperma (Spade flower).